The following is a 207-amino-acid chain: Protein GrpE (207 aa).

The interval 1–33 (MTDPNGPKDIPEQSAEAAEPVVSKPYIMPDDPE) is disordered.

It belongs to the GrpE family. In terms of assembly, homodimer.

The protein resides in the cytoplasm. Participates actively in the response to hyperosmotic and heat shock by preventing the aggregation of stress-denatured proteins, in association with DnaK and GrpE. It is the nucleotide exchange factor for DnaK and may function as a thermosensor. Unfolded proteins bind initially to DnaJ; upon interaction with the DnaJ-bound protein, DnaK hydrolyzes its bound ATP, resulting in the formation of a stable complex. GrpE releases ADP from DnaK; ATP binding to DnaK triggers the release of the substrate protein, thus completing the reaction cycle. Several rounds of ATP-dependent interactions between DnaJ, DnaK and GrpE are required for fully efficient folding. This Rhodopseudomonas palustris (strain BisA53) protein is Protein GrpE.